The sequence spans 499 residues: Putative antiporter subunit mnhD2 (499 aa).

The next 14 membrane-spanning stretches (helical) occupy residues 3–23 (SNLL…LVFT), 32–52 (ILYI…LIYV), 78–98 (LSLV…SYGF), 108–128 (YYLP…FLTS), 130–150 (LFNL…LVTL), 161–181 (IIYV…IGLL), 206–226 (IIII…LVLF), 240–260 (LAAL…IRFF), 273–293 (PLLV…VIAY), 308–328 (IGFV…GAIF), 330–350 (LAND…LVYM), 368–388 (FFGV…PFSG), 403–423 (GNFI…YSLF), and 450–470 (TILG…PVVM).

Belongs to the CPA3 antiporters (TC 2.A.63) subunit D family. May form a heterooligomeric complex that consists of seven subunits: mnhA2, mnhB2, mnhC2, mnhD2, mnhE2, mnhF2 and mnhG2.

The protein localises to the cell membrane. The protein is Putative antiporter subunit mnhD2 (mnhD2) of Staphylococcus haemolyticus (strain JCSC1435).